The sequence spans 371 residues: 4-hydroxy-3-methylbut-2-en-1-yl diphosphate synthase (flavodoxin) (371 aa).

[4Fe-4S] cluster contacts are provided by Cys-270, Cys-273, Cys-305, and Glu-312.

This sequence belongs to the IspG family. [4Fe-4S] cluster is required as a cofactor.

It catalyses the reaction (2E)-4-hydroxy-3-methylbut-2-enyl diphosphate + oxidized [flavodoxin] + H2O + 2 H(+) = 2-C-methyl-D-erythritol 2,4-cyclic diphosphate + reduced [flavodoxin]. It participates in isoprenoid biosynthesis; isopentenyl diphosphate biosynthesis via DXP pathway; isopentenyl diphosphate from 1-deoxy-D-xylulose 5-phosphate: step 5/6. Functionally, converts 2C-methyl-D-erythritol 2,4-cyclodiphosphate (ME-2,4cPP) into 1-hydroxy-2-methyl-2-(E)-butenyl 4-diphosphate. This is 4-hydroxy-3-methylbut-2-en-1-yl diphosphate synthase (flavodoxin) from Psychrobacter arcticus (strain DSM 17307 / VKM B-2377 / 273-4).